The primary structure comprises 692 residues: Hexamerin-1.1 (692 aa).

An N-terminal signal peptide occupies residues 1–18 (MKLLILAVAISLAVLASG). N203 is a glycosylation site (N-linked (GlcNAc...) asparagine).

Belongs to the hemocyanin family. In terms of assembly, homohexamer. Larval fat body.

It is found in the secreted. The protein localises to the extracellular space. Its function is as follows. Larval storage protein (LSP) which may serve as a store of amino acids for synthesis of adult proteins. This is Hexamerin-1.1 (HexA) from Anopheles gambiae (African malaria mosquito).